Reading from the N-terminus, the 157-residue chain is 3-hydroxyacyl-[acyl-carrier-protein] dehydratase FabZ (157 aa).

Histidine 58 is a catalytic residue.

It belongs to the thioester dehydratase family. FabZ subfamily.

The protein resides in the cytoplasm. It catalyses the reaction a (3R)-hydroxyacyl-[ACP] = a (2E)-enoyl-[ACP] + H2O. Involved in unsaturated fatty acids biosynthesis. Catalyzes the dehydration of short chain beta-hydroxyacyl-ACPs and long chain saturated and unsaturated beta-hydroxyacyl-ACPs. The polypeptide is 3-hydroxyacyl-[acyl-carrier-protein] dehydratase FabZ (Rhizorhabdus wittichii (strain DSM 6014 / CCUG 31198 / JCM 15750 / NBRC 105917 / EY 4224 / RW1) (Sphingomonas wittichii)).